Reading from the N-terminus, the 331-residue chain is Protein RecA (331 aa).

67 to 74 provides a ligand contact to ATP; it reads GPESSGKT.

It belongs to the RecA family.

Its subcellular location is the cytoplasm. Its function is as follows. Can catalyze the hydrolysis of ATP in the presence of single-stranded DNA, the ATP-dependent uptake of single-stranded DNA by duplex DNA, and the ATP-dependent hybridization of homologous single-stranded DNAs. It interacts with LexA causing its activation and leading to its autocatalytic cleavage. This chain is Protein RecA, found in Wigglesworthia glossinidia brevipalpis.